The primary structure comprises 280 residues: Beta-glucosyl-HMC-alpha-glucosyl-transferase (280 aa).

It functions in the pathway genetic information processing; DNA modification. In terms of biological role, transfers a gentiobiosyl-group on a hydroxymethylcytosine residue in DNA. Is involved in a DNA modification process to protects the phage genome against its own nucleases and the host restriction endonuclease system. The protein is Beta-glucosyl-HMC-alpha-glucosyl-transferase of Enterobacteria phage T6 (Bacteriophage T6).